A 709-amino-acid chain; its full sequence is Glycerol kinase (709 aa).

A substrate-binding site is contributed by Thr56. Arg60 serves as a coordination point for ATP. Residues 86–110 are disordered; sequence KIGVSGLRRPSTAPARETPNAGDIK. Residues Arg201, Tyr258, and Asp386 each contribute to the substrate site. ATP-binding positions include Thr408, Gly463, and 584–588; that span reads GMSRS.

This sequence belongs to the FGGY kinase family.

The catalysed reaction is glycerol + ATP = sn-glycerol 3-phosphate + ADP + H(+). The protein operates within polyol metabolism; glycerol degradation via glycerol kinase pathway; sn-glycerol 3-phosphate from glycerol: step 1/1. Its function is as follows. Key enzyme in the regulation of glycerol uptake and metabolism. Catalyzes the phosphorylation of glycerol to yield sn-glycerol 3-phosphate. This Saccharomyces cerevisiae (strain ATCC 204508 / S288c) (Baker's yeast) protein is Glycerol kinase (GUT1).